The sequence spans 217 residues: UPF0173 metal-dependent hydrolase MJ1163 (217 aa).

It belongs to the UPF0173 family.

This Methanocaldococcus jannaschii (strain ATCC 43067 / DSM 2661 / JAL-1 / JCM 10045 / NBRC 100440) (Methanococcus jannaschii) protein is UPF0173 metal-dependent hydrolase MJ1163.